Reading from the N-terminus, the 347-residue chain is GMP reductase (347 aa).

108-131 (ADFQKTKDVMALSDELIFICIDIA) provides a ligand contact to NADP(+). Gly181 and Gly183 together coordinate K(+). Cys186 functions as the Thioimidate intermediate in the catalytic mechanism. 216–239 (IIGDGGCTCPGDVAKAFGGGADFV) is an NADP(+) binding site.

This sequence belongs to the IMPDH/GMPR family. GuaC type 1 subfamily. Homotetramer.

The enzyme catalyses IMP + NH4(+) + NADP(+) = GMP + NADPH + 2 H(+). Catalyzes the irreversible NADPH-dependent deamination of GMP to IMP. It functions in the conversion of nucleobase, nucleoside and nucleotide derivatives of G to A nucleotides, and in maintaining the intracellular balance of A and G nucleotides. In Vibrio cholerae serotype O1 (strain ATCC 39541 / Classical Ogawa 395 / O395), this protein is GMP reductase.